The primary structure comprises 424 residues: Ribulose bisphosphate carboxylase (424 aa).

Catalysis depends on Lys-159, which acts as the Proton acceptor. Position 161 (Lys-161) interacts with substrate. The Mg(2+) site is built by Lys-185, Asp-187, and Glu-188. N6-carboxylysine is present on Lys-185. His-277 (proton acceptor) is an active-site residue. Substrate-binding positions include Arg-278, His-310, 347–349, and 369–372; these read SGG and QAGG.

This sequence belongs to the RuBisCO large chain family. Type III subfamily. In terms of assembly, homodimer or homodecamer. In contrast to form I RuBisCO, the form III RuBisCO is composed solely of large subunits. It depends on Mg(2+) as a cofactor.

It carries out the reaction 2 (2R)-3-phosphoglycerate + 2 H(+) = D-ribulose 1,5-bisphosphate + CO2 + H2O. The enzyme catalyses D-ribulose 1,5-bisphosphate + O2 = 2-phosphoglycolate + (2R)-3-phosphoglycerate + 2 H(+). Functionally, catalyzes the addition of molecular CO(2) and H(2)O to ribulose 1,5-bisphosphate (RuBP), generating two molecules of 3-phosphoglycerate (3-PGA). Functions in an archaeal AMP degradation pathway, together with AMP phosphorylase and R15P isomerase. This Pyrococcus abyssi (strain GE5 / Orsay) protein is Ribulose bisphosphate carboxylase.